Consider the following 604-residue polypeptide: Glucose oxidase (604 aa).

A signal peptide spans 1 to 18 (MKSTIITSILFSVATVQA). FAD contacts are provided by L52, T53, and E73. N-linked (GlcNAc...) asparagine glycosylation is present at N111. Residues S125, N129, G130, and S132 each contribute to the FAD site. A disulfide bond links C186 and C228. A glycan (N-linked (GlcNAc...) asparagine) is linked at N213. V272 contacts FAD. 3 N-linked (GlcNAc...) asparagine glycosylation sites follow: N278, N409, and N531. H537 functions as the Proton acceptor in the catalytic mechanism. Residues K558 and V559 each contribute to the O2 site. FAD is bound by residues G570 and M582.

It belongs to the GMC oxidoreductase family. As to quaternary structure, homodimer. The cofactor is FAD.

It is found in the secreted. The protein localises to the cell wall. It localises to the cytoplasm. The protein resides in the extracellular space. Its subcellular location is the extracellular matrix. It catalyses the reaction beta-D-glucose + O2 = D-glucono-1,5-lactone + H2O2. Functionally, glucose oxidase catalyzes the oxidation of beta-D-glucose to D-glucono-delta-lactone and hydrogen peroxide in the presence of molecular oxygen. The enzyme also catalyzes the reaction with D-xylose but at a much lower rate. Shows any activities against D-fructose, D-galactose and D-arabinose. The enzyme is cytotoxic for a series of bacteria, yeasts and filamentous fungi and acts primarily via the liberation of H(2)O(2), which is a harmful oxidative stress-generating agent. The chain is Glucose oxidase from Penicillium chrysogenum (Penicillium notatum).